Here is a 186-residue protein sequence, read N- to C-terminus: FMN-dependent NADH:quinone oxidoreductase 1 (186 aa).

FMN is bound by residues 15 to 17 (SVS) and 81 to 84 (MYNF).

The protein belongs to the azoreductase type 1 family. Homodimer. The cofactor is FMN.

It catalyses the reaction 2 a quinone + NADH + H(+) = 2 a 1,4-benzosemiquinone + NAD(+). The catalysed reaction is N,N-dimethyl-1,4-phenylenediamine + anthranilate + 2 NAD(+) = 2-(4-dimethylaminophenyl)diazenylbenzoate + 2 NADH + 2 H(+). Its function is as follows. Quinone reductase that provides resistance to thiol-specific stress caused by electrophilic quinones. Functionally, also exhibits azoreductase activity. Catalyzes the reductive cleavage of the azo bond in aromatic azo compounds to the corresponding amines. The sequence is that of FMN-dependent NADH:quinone oxidoreductase 1 from Idiomarina loihiensis (strain ATCC BAA-735 / DSM 15497 / L2-TR).